Here is a 62-residue protein sequence, read N- to C-terminus: Large ribosomal subunit protein bL28 (62 aa).

Residues 1–28 (MARKCVITGRKSRSGNSRSHAMNASKRT) form a disordered region. The segment covering 14–26 (SGNSRSHAMNASK) has biased composition (polar residues).

The protein belongs to the bacterial ribosomal protein bL28 family.

In Bacillus licheniformis (strain ATCC 14580 / DSM 13 / JCM 2505 / CCUG 7422 / NBRC 12200 / NCIMB 9375 / NCTC 10341 / NRRL NRS-1264 / Gibson 46), this protein is Large ribosomal subunit protein bL28.